A 131-amino-acid polypeptide reads, in one-letter code: Hypocretin neuropeptide precursor (131 aa).

The N-terminal stretch at 1-33 (MNPPFAKVSWATVTLLLLLLLLPPAVLSPGAAA) is a signal peptide. Pyrrolidone carboxylic acid is present on Gln34. Disulfide bonds link Cys39–Cys45 and Cys40–Cys47. At Leu66 the chain carries Leucine amide. At Met97 the chain carries Methionine amide. Positions 98–131 (GRRAGAEPAPRLCPGRRCLAAAASSVAPGGRSGI) are cleaved as a propeptide — removed in mature form.

Belongs to the orexin family. Post-translationally, specific enzymatic cleavages at paired basic residues yield the different active peptides.

Its subcellular location is the rough endoplasmic reticulum. The protein resides in the cytoplasmic vesicle. It localises to the synapse. Its function is as follows. Neuropeptides that play a significant role in the regulation of food intake and sleep-wakefulness, possibly by coordinating the complex behavioral and physiologic responses of these complementary homeostatic functions. A broader role in the homeostatic regulation of energy metabolism, autonomic function, hormonal balance and the regulation of body fluids, is also suggested. In terms of biological role, binds to orexin receptors HCRTR1/OX1R and HCRTR2/OX2R with a high affinity. Stimulates food intake. Modulates pituitary luteinizing hormone secretion in an ovarian steroid-dependent manner. Functionally, binds to orexin receptor HCRTR2/OX2R only. Stimulates food intake. Modulates pituitary luteinizing hormone secretion in an ovarian steroid-dependent manner. In Sus scrofa (Pig), this protein is Hypocretin neuropeptide precursor (HCRT).